A 319-amino-acid polypeptide reads, in one-letter code: Taste receptor type 2 member 14 (319 aa).

The Extracellular segment spans residues 1-7 (MDGVIKS). A helical transmembrane segment spans residues 8–28 (IFTFILILEFIIGNLGNSFIV). Over 29-55 (LVNCIDWVKRRKISLVDQLLIALAISR) the chain is Cytoplasmic. The helical transmembrane segment at 56–76 (ISLVWSIFGSWCVSVVFPALF) threads the bilayer. The Extracellular segment spans residues 77 to 87 (ATEKLLRMLTN). Positions 86 and 89 each coordinate cholesterol. Residues 88-108 (IWTVTNHFSVWLATILGTFYF) traverse the membrane as a helical segment. Over 109-129 (LKIANFSNSIFLYLKWRVKKV) the chain is Cytoplasmic. Residues 130 to 150 (VLVLLLVTLVLLFLNILLINI) form a helical membrane-spanning segment. Topologically, residues 151–184 (HINASINGYRGNMTCSSASCNFIRFSSAIALTST) are extracellular. Asparagine 153 and asparagine 162 each carry an N-linked (GlcNAc...) asparagine glycan. Alanine 180 provides a ligand contact to cholesterol. Residues 185–205 (VFILIPFTLSLATFLLLSFSL) traverse the membrane as a helical segment. The Cytoplasmic portion of the chain corresponds to 206–232 (WKHRKKMQHTVKGYRDVSTKAHRGVMQ). The chain crosses the membrane as a helical span at residues 233–253 (TVITFLLLYAVFFLTFFVSIW). Residues 254–261 (ISERLKEN) are Extracellular-facing. The helical transmembrane segment at 262–282 (QIIILSEMMGLAYPSGHSCVL) threads the bilayer. Isoleucine 265 and glutamate 268 together coordinate cholesterol. Residues 283-317 (ILGNKKLRQASLSVLWWLRYRFKDGELSGHKEFRE) lie on the Cytoplasmic side of the membrane.

The protein belongs to the G-protein coupled receptor T2R family. In terms of assembly, core component of the TAS2R14-GNAI1 complex, consisting of TAS2R14, GNAI1, GNB1 and GNG2; within the complex interacts with GNAI1. Core component of the TAS2R14-GNAT3 complex, consisting of TAS2R14, GNAT3, GNB1 and GNG2; within the complex interacts with GNAT3. Core component of the TAS2R14-GNAS2 complex, consisting of TAS2R14, GNAS2, GNB1 and GNG2; within the complex interacts with GNAS2.

The protein resides in the membrane. It carries out the reaction Ca(2+)(in) = Ca(2+)(out). It catalyses the reaction 3',5'-cyclic AMP(in) = 3',5'-cyclic AMP(out). Its activity is regulated as follows. Basal activity is enhanced by binding to bitter tastants, such as flufenamic acid and aristolochic acid. Regulated by cholesterol in a concentration-dependent manner. In terms of biological role, gustducin-linked G-protein coupled receptor that plays a role in the perception of bitterness. The activity of this receptor stimulates GNAT3, activating the gustducin G-protein pathway. Likely plays a role in sensing the chemical composition of the gastrointestinal content and other extra-oral tissues via the inhibitory G-protein pathways. This is Taste receptor type 2 member 14 (TAS2R14) from Papio hamadryas (Hamadryas baboon).